The following is a 756-amino-acid chain: Zinc finger and BTB domain-containing protein 49 (756 aa).

The BTB domain maps to cysteine 25–glutamine 91. Disordered regions lie at residues alanine 176–cysteine 197, proline 226–proline 290, and serine 311–alanine 379. Positions proline 226–threonine 242 are enriched in polar residues. Composition is skewed to basic and acidic residues over residues serine 319–glutamate 341 and alanine 348–glutamate 365. 7 consecutive C2H2-type zinc fingers follow at residues tyrosine 386 to histidine 408, phenylalanine 414 to histidine 436, tyrosine 442 to histidine 464, histidine 470 to histidine 492, phenylalanine 498 to histidine 520, tyrosine 526 to histidine 548, and tyrosine 554 to histidine 576.

Belongs to the krueppel C2H2-type zinc-finger protein family. In terms of assembly, interacts with EP300, KAT5/Tip60 and ZBTB17. The interaction with EP300 is direct and leads to synergistic induction of CDKN1A. On the CDKN1A promoter, forms a complex with ZBTB17; this interaction leads to additive CDKN1A transactivation. The interaction with ZBTB17 may block ZBTB17 repressor activity. Widely expressed, with highest levels in white adipose tissue and kidney, intermediate levels in brain, liver and heart, and lowest levels in spleen, brown adipose tissue and muscle.

It is found in the cytoplasm. Its subcellular location is the nucleus. Functionally, transcription factor. Inhibits cell proliferation by activating either CDKN1A/p21 transcription or RB1 transcription. This chain is Zinc finger and BTB domain-containing protein 49 (Zbtb49), found in Mus musculus (Mouse).